A 104-amino-acid polypeptide reads, in one-letter code: Vegetative-specific protein H7 (104 aa).

The HTH cro/C1-type domain occupies 43–97 (IQRARNALKMTQKELAFKINERPGVINEYESGSAIPSQAVLSKLEKALNVKLRGK). Residues 54–73 (QKELAFKINERPGVINEYES) constitute a DNA-binding region (H-T-H motif).

In Dictyostelium discoideum (Social amoeba), this protein is Vegetative-specific protein H7 (cinD-1).